The chain runs to 495 residues: Aspartyl/glutamyl-tRNA(Asn/Gln) amidotransferase subunit B (495 aa).

The protein belongs to the GatB/GatE family. GatB subfamily. As to quaternary structure, heterotrimer of A, B and C subunits.

The catalysed reaction is L-glutamyl-tRNA(Gln) + L-glutamine + ATP + H2O = L-glutaminyl-tRNA(Gln) + L-glutamate + ADP + phosphate + H(+). It carries out the reaction L-aspartyl-tRNA(Asn) + L-glutamine + ATP + H2O = L-asparaginyl-tRNA(Asn) + L-glutamate + ADP + phosphate + 2 H(+). Its function is as follows. Allows the formation of correctly charged Asn-tRNA(Asn) or Gln-tRNA(Gln) through the transamidation of misacylated Asp-tRNA(Asn) or Glu-tRNA(Gln) in organisms which lack either or both of asparaginyl-tRNA or glutaminyl-tRNA synthetases. The reaction takes place in the presence of glutamine and ATP through an activated phospho-Asp-tRNA(Asn) or phospho-Glu-tRNA(Gln). This chain is Aspartyl/glutamyl-tRNA(Asn/Gln) amidotransferase subunit B, found in Gloeothece citriformis (strain PCC 7424) (Cyanothece sp. (strain PCC 7424)).